The following is a 743-amino-acid chain: Threonine--tRNA ligase (743 aa).

The segment covering 1-15 (MSADSPSSPASSQAA) has biased composition (low complexity). Residues 1-30 (MSADSPSSPASSQAAEVQVRLPDGSLKTQP) are disordered. The TGS domain occupies 13–76 (QAAEVQVRLP…GEIADDENVV (64 aa)). Residues 264–619 (DHRVLGKQHG…LIEHFAGAFP (356 aa)) are catalytic. The insert stretch occupies residues 354–404 (AWSTRLDKDDLSKDDEDKLIAAAEVFGVKLPDYKPSASNDAKKDVLHRWQL). Zn(2+) contacts are provided by C416, H467, and H596.

Belongs to the class-II aminoacyl-tRNA synthetase family. In terms of assembly, homodimer. Zn(2+) is required as a cofactor.

The protein localises to the cytoplasm. The catalysed reaction is tRNA(Thr) + L-threonine + ATP = L-threonyl-tRNA(Thr) + AMP + diphosphate + H(+). Catalyzes the attachment of threonine to tRNA(Thr) in a two-step reaction: L-threonine is first activated by ATP to form Thr-AMP and then transferred to the acceptor end of tRNA(Thr). Also edits incorrectly charged L-seryl-tRNA(Thr). This chain is Threonine--tRNA ligase, found in Rhodopirellula baltica (strain DSM 10527 / NCIMB 13988 / SH1).